Reading from the N-terminus, the 380-residue chain is Alpha-N-acetylneuraminate alpha-2,8-sialyltransferase ST8SIA3 (380 aa).

The Cytoplasmic segment spans residues 1 to 17; the sequence is MRNCKMARVASVLGLVM. A helical; Signal-anchor for type II membrane protein membrane pass occupies residues 18–33; it reads LSVALLILSLISYVSL. Residues 34–380 are Lumenal-facing; it reads KKENIFTTPK…LTKLTLSHCA (347 aa). Residues N93 and N113 are each glycosylated (N-linked (GlcNAc...) asparagine). 2 disulfides stabilise this stretch: C162/C313 and C176/C379. CMP-N-acetyl-beta-neuraminate is bound by residues N167 and N190. An N-linked (GlcNAc...) asparagine glycan is attached at N206. Residues S300, T301, G302, W322, Y336, and H337 each contribute to the CMP-N-acetyl-beta-neuraminate site. H354 functions as the Proton donor/acceptor in the catalytic mechanism.

Belongs to the glycosyltransferase 29 family. Homodimer. As to expression, expressed in neurons in brain with higher expression in the striatum than in the hippocampus, cortex, and cerebellum (at protein level). Expressed in testes.

The protein localises to the golgi apparatus membrane. It catalyses the reaction a ganglioside GM3 (d18:1(4E)) + CMP-N-acetyl-beta-neuraminate = a ganglioside GD3 (d18:1(4E)) + CMP + H(+). The enzyme catalyses a ganglioside GM3 + CMP-N-acetyl-beta-neuraminate = a ganglioside GD3 + CMP + H(+). The catalysed reaction is an N-acetyl-alpha-neuraminyl-(2-&gt;3)-beta-D-galactosyl derivative + CMP-N-acetyl-beta-neuraminate = an N-acetyl-alpha-neuraminyl-(2-&gt;8)-N-acetyl-alpha-neuraminyl-(2-&gt;3)-beta-D-galactosyl derivative + CMP + H(+). It carries out the reaction an N-acetyl-alpha-neuraminyl-(2-&gt;3)-beta-D-galactosyl-(1-&gt;4)-N-acetyl-beta-D-glucosaminyl derivative + CMP-N-acetyl-beta-neuraminate = an alpha-Neu5Ac-(2-&gt;8)-alpha-Neu5Ac-(2-&gt;3)-beta-D-Gal-(1-&gt;4)-beta-D-GlcNAc derivative + CMP + H(+). It participates in protein modification; protein glycosylation. Its function is as follows. Catalyzes the transfer of sialic acid from a CMP-linked sialic acid donor onto a terminal alpha-2,3-, alpha-2,6-, or alpha-2,8-linked sialic acid of an acceptor, such as N-linked oligosaccharides of glycoproteins and glycolipids through alpha-2,8-linkages. Forms oligosialic and polysialic acid on various sialylated N-acetyllactosamine oligosaccharides of glycoproteins, including FETUB N-glycans, a2-HS-glycoprotein (AHSG) and alpha 2,3-sialylated glycosphingolipids, such as alpha 2,3-sialylparagloboside and ganglioside GM3 and to a lesser extent NCAM1 N-glycans. However, it is much more specific to N-linked oligosaccharides of glycoproteins than glycosphingolipids. 2,3-sialylparagloboside served as the best acceptor substrate among the glycolipids. alpha-Neu5Ac-(2-&gt;8)-alpha-Neu5Ac-(2-&gt;3)-beta-D-Gal-(1-&gt;4)-6S-D-GlcNAc and monosialyl and disialyl N-acetyllactosamines are the best acceptor substrates among glycoproteins. May play critical role in the striatum by mediating the formation of disialylated and trisialylated terminal glycotopes on N- and O-glycans of specific striatal proteins, regulating their distribution in lipid rafts, affecting their interaction with other binding partners, and subsequently modulating striatal functions. The chain is Alpha-N-acetylneuraminate alpha-2,8-sialyltransferase ST8SIA3 from Mus musculus (Mouse).